A 161-amino-acid polypeptide reads, in one-letter code: Bacterioferritin (161 aa).

A Ferritin-like diiron domain is found at 1-145; sequence MKGDAKVIEF…TQISLYDRLG (145 aa). Positions 18 and 51 each coordinate Fe cation. Met52 serves as a coordination point for heme b. Fe cation-binding residues include His54, Glu94, Glu127, and His130.

It belongs to the bacterioferritin family. As to quaternary structure, homooligomer of 24 subunits, arranged as 12 dimers, that are packed together to form an approximately spherical molecule with a central cavity, in which large amounts of iron can be deposited. Requires heme b as cofactor.

It carries out the reaction 4 Fe(2+) + O2 + 4 H(+) = 4 Fe(3+) + 2 H2O. The catalysed reaction is Fe(2+)(in) = Fe(2+)(out). Iron-storage protein, whose ferroxidase center binds Fe(2+), oxidizes it using dioxygen to Fe(3+), and participates in the subsequent Fe(3+) oxide mineral core formation within the central cavity of the BFR protein shell. This Rhodobacter capsulatus (Rhodopseudomonas capsulata) protein is Bacterioferritin (bfr).